A 352-amino-acid polypeptide reads, in one-letter code: DNA integrity scanning protein DisA (352 aa).

In terms of domain architecture, DAC spans 3-143 (DERIVLALKS…FKYSLSEVSV (141 aa)). ATP-binding positions include glycine 70, leucine 88, and 101–105 (IRHRT).

Belongs to the DisA family. Homooctamer. The cofactor is Mg(2+).

The catalysed reaction is 2 ATP = 3',3'-c-di-AMP + 2 diphosphate. Participates in a DNA-damage check-point that is active prior to asymmetric division when DNA is damaged. DisA forms globular foci that rapidly scan along the chromosomes during sporulation, searching for lesions. When a lesion is present, DisA pauses at the lesion site. This triggers a cellular response that culminates in a temporary block in sporulation initiation. Functionally, also has diadenylate cyclase activity, catalyzing the condensation of 2 ATP molecules into cyclic di-AMP (c-di-AMP). c-di-AMP acts as a signaling molecule that couples DNA integrity with progression of sporulation. The rise in c-di-AMP level generated by DisA while scanning the chromosome, operates as a positive signal that advances sporulation; upon encountering a lesion, the DisA focus arrests at the damaged site and halts c-di-AMP synthesis. The polypeptide is DNA integrity scanning protein DisA (Carboxydothermus hydrogenoformans (strain ATCC BAA-161 / DSM 6008 / Z-2901)).